The chain runs to 424 residues: Enolase (424 aa).

Gln-163 contacts (2R)-2-phosphoglycerate. The active-site Proton donor is Glu-205. 3 residues coordinate Mg(2+): Asp-242, Glu-285, and Asp-312. Positions 337, 366, 367, and 388 each coordinate (2R)-2-phosphoglycerate. Residue Lys-337 is the Proton acceptor of the active site.

Belongs to the enolase family. It depends on Mg(2+) as a cofactor.

It is found in the cytoplasm. The protein localises to the secreted. The protein resides in the cell surface. It carries out the reaction (2R)-2-phosphoglycerate = phosphoenolpyruvate + H2O. Its pathway is carbohydrate degradation; glycolysis; pyruvate from D-glyceraldehyde 3-phosphate: step 4/5. Catalyzes the reversible conversion of 2-phosphoglycerate (2-PG) into phosphoenolpyruvate (PEP). It is essential for the degradation of carbohydrates via glycolysis. In Dinoroseobacter shibae (strain DSM 16493 / NCIMB 14021 / DFL 12), this protein is Enolase.